The chain runs to 178 residues: Large ribosomal subunit protein uL6 (178 aa).

Belongs to the universal ribosomal protein uL6 family. Part of the 50S ribosomal subunit.

Its function is as follows. This protein binds to the 23S rRNA, and is important in its secondary structure. It is located near the subunit interface in the base of the L7/L12 stalk, and near the tRNA binding site of the peptidyltransferase center. The polypeptide is Large ribosomal subunit protein uL6 (Corynebacterium urealyticum (strain ATCC 43042 / DSM 7109)).